A 246-amino-acid chain; its full sequence is tRNA pseudouridine synthase A (246 aa).

The active-site Nucleophile is the Asp-52. Position 111 (Tyr-111) interacts with substrate.

It belongs to the tRNA pseudouridine synthase TruA family. In terms of assembly, homodimer.

The catalysed reaction is uridine(38/39/40) in tRNA = pseudouridine(38/39/40) in tRNA. In terms of biological role, formation of pseudouridine at positions 38, 39 and 40 in the anticodon stem and loop of transfer RNAs. The sequence is that of tRNA pseudouridine synthase A from Ehrlichia ruminantium (strain Gardel).